Reading from the N-terminus, the 330-residue chain is Ferredoxin--NADP reductase (330 aa).

FAD contacts are provided by glutamate 35, glutamine 43, tyrosine 48, valine 90, phenylalanine 123, aspartate 285, and threonine 326.

The protein belongs to the ferredoxin--NADP reductase type 2 family. Homodimer. FAD is required as a cofactor.

It catalyses the reaction 2 reduced [2Fe-2S]-[ferredoxin] + NADP(+) + H(+) = 2 oxidized [2Fe-2S]-[ferredoxin] + NADPH. This Streptococcus pyogenes serotype M3 (strain ATCC BAA-595 / MGAS315) protein is Ferredoxin--NADP reductase.